We begin with the raw amino-acid sequence, 185 residues long: Ribosome-recycling factor (185 aa).

The protein belongs to the RRF family.

Its subcellular location is the cytoplasm. Responsible for the release of ribosomes from messenger RNA at the termination of protein biosynthesis. May increase the efficiency of translation by recycling ribosomes from one round of translation to another. The sequence is that of Ribosome-recycling factor from Geobacillus thermodenitrificans (strain NG80-2).